Reading from the N-terminus, the 266-residue chain is Thymidylate synthase (266 aa).

Arginine 24 is a dUMP binding site. Histidine 54 serves as a coordination point for (6R)-5,10-methylene-5,6,7,8-tetrahydrofolate. 129-130 (RR) serves as a coordination point for dUMP. Cysteine 149 (nucleophile) is an active-site residue. DUMP-binding positions include 169–172 (RSAD), asparagine 180, and 210–212 (HIY). Position 172 (aspartate 172) interacts with (6R)-5,10-methylene-5,6,7,8-tetrahydrofolate. Alanine 265 lines the (6R)-5,10-methylene-5,6,7,8-tetrahydrofolate pocket.

The protein belongs to the thymidylate synthase family. Bacterial-type ThyA subfamily. In terms of assembly, homodimer.

It is found in the cytoplasm. It catalyses the reaction dUMP + (6R)-5,10-methylene-5,6,7,8-tetrahydrofolate = 7,8-dihydrofolate + dTMP. It functions in the pathway pyrimidine metabolism; dTTP biosynthesis. Catalyzes the reductive methylation of 2'-deoxyuridine-5'-monophosphate (dUMP) to 2'-deoxythymidine-5'-monophosphate (dTMP) while utilizing 5,10-methylenetetrahydrofolate (mTHF) as the methyl donor and reductant in the reaction, yielding dihydrofolate (DHF) as a by-product. This enzymatic reaction provides an intracellular de novo source of dTMP, an essential precursor for DNA biosynthesis. The sequence is that of Thymidylate synthase from Mycobacterium leprae (strain TN).